Here is a 134-residue protein sequence, read N- to C-terminus: 6,7-dimethyl-8-ribityllumazine synthase (134 aa).

5-amino-6-(D-ribitylamino)uracil is bound by residues F12, 44–46 (VFD), and 68–70 (SVI). 73–74 (DT) contacts (2S)-2-hydroxy-3-oxobutyl phosphate. The active-site Proton donor is the H76. L101 serves as a coordination point for 5-amino-6-(D-ribitylamino)uracil. Residue R116 coordinates (2S)-2-hydroxy-3-oxobutyl phosphate.

The protein belongs to the DMRL synthase family.

The enzyme catalyses (2S)-2-hydroxy-3-oxobutyl phosphate + 5-amino-6-(D-ribitylamino)uracil = 6,7-dimethyl-8-(1-D-ribityl)lumazine + phosphate + 2 H2O + H(+). Its pathway is cofactor biosynthesis; riboflavin biosynthesis; riboflavin from 2-hydroxy-3-oxobutyl phosphate and 5-amino-6-(D-ribitylamino)uracil: step 1/2. Functionally, catalyzes the formation of 6,7-dimethyl-8-ribityllumazine by condensation of 5-amino-6-(D-ribitylamino)uracil with 3,4-dihydroxy-2-butanone 4-phosphate. This is the penultimate step in the biosynthesis of riboflavin. The polypeptide is 6,7-dimethyl-8-ribityllumazine synthase (Methanosarcina barkeri (strain Fusaro / DSM 804)).